The sequence spans 304 residues: Acetylglutamate kinase (304 aa).

Residues 77-78 (GG), Arg99, and Asn193 each bind substrate.

It belongs to the acetylglutamate kinase family. ArgB subfamily.

Its subcellular location is the cytoplasm. It catalyses the reaction N-acetyl-L-glutamate + ATP = N-acetyl-L-glutamyl 5-phosphate + ADP. Its pathway is amino-acid biosynthesis; L-arginine biosynthesis; N(2)-acetyl-L-ornithine from L-glutamate: step 2/4. Catalyzes the ATP-dependent phosphorylation of N-acetyl-L-glutamate. The sequence is that of Acetylglutamate kinase from Pelodictyon phaeoclathratiforme (strain DSM 5477 / BU-1).